We begin with the raw amino-acid sequence, 263 residues long: Small ribosomal subunit protein eS4, Y isoform 2 (263 aa).

An S4 RNA-binding domain is found at 42-104 (LPLIVFLRNR…TGEHFRLVYD (63 aa)).

Belongs to the eukaryotic ribosomal protein eS4 family.

This Pan troglodytes (Chimpanzee) protein is Small ribosomal subunit protein eS4, Y isoform 2 (RPS4Y2).